A 437-amino-acid polypeptide reads, in one-letter code: Isthmin-2 (437 aa).

A signal peptide spans 1–25 (MLRARKGLWVLLSVLLAFWIERAIS). The disordered stretch occupies residues 156-191 (DSGEDGTGQAEDEEDDYDYDSGEPIPSGLGKTDGDW). Residues 165 to 176 (AEDEEDDYDYDS) show a composition bias toward acidic residues. Residues 197–242 (EEKEEEWSTWSPCSVTCGHGNQTRSRSCGDFCTSTESQSCDLVPCP) form the TSP type-1 domain. 3 disulfides stabilise this stretch: cysteine 209-cysteine 236, cysteine 213-cysteine 241, and cysteine 224-cysteine 228. Asparagine 217 carries N-linked (GlcNAc...) asparagine glycosylation. Residues asparagine 258 and asparagine 349 are each glycosylated (N-linked (GlcNAc...) asparagine). Positions 262 to 425 (PYGTDVGSCE…LHCMENPQQD (164 aa)) constitute an AMOP domain.

This sequence belongs to the isthmin family.

It is found in the secreted. The protein is Isthmin-2 (ism2) of Danio rerio (Zebrafish).